A 1342-amino-acid chain; its full sequence is DNA-directed RNA polymerase subunit beta (1342 aa).

It belongs to the RNA polymerase beta chain family. The RNAP catalytic core consists of 2 alpha, 1 beta, 1 beta' and 1 omega subunit. When a sigma factor is associated with the core the holoenzyme is formed, which can initiate transcription.

It carries out the reaction RNA(n) + a ribonucleoside 5'-triphosphate = RNA(n+1) + diphosphate. Functionally, DNA-dependent RNA polymerase catalyzes the transcription of DNA into RNA using the four ribonucleoside triphosphates as substrates. The protein is DNA-directed RNA polymerase subunit beta of Histophilus somni (strain 129Pt) (Haemophilus somnus).